Here is a 189-residue protein sequence, read N- to C-terminus: MINTQDSSILPLSNCPQLQCCRHIVPGPLWCSDAPHPLSKIPGGRGGGRDPSLSALIYKDEKLTVTQDLPVNDGKPHIVHFQYEVTEVKVSSWDAVLSSQSLFVEIPDGLLADGSKEGLLALLEFAEEKMKVNYVFICFRKGREDRAPLLKTFSFLGFEIVRPGHPCVPSRPDVMFMVYPLDQNLSDED.

Residue Ser-186 is modified to Phosphoserine.

The protein belongs to the ODC antizyme family. In terms of assembly, interacts with ODC1 and thereby sterically blocks ODC homodimerization. Interacts with AZIN2; this interaction disrupts the interaction between the antizyme and ODC1.

It localises to the nucleus. Functionally, ornithine decarboxylase (ODC) antizyme protein that negatively regulates ODC activity and intracellular polyamine biosynthesis and uptake in response to increased intracellular polyamine levels. Binds to ODC monomers, inhibiting the assembly of the functional ODC homodimers. Does not target the ODC monomers for degradation, which allows a protein synthesis-independent restoration of ODC activity. Involved in the translocation of AZIN2 from ER-Golgi intermediate compartment (ERGIC) to the cytosol. This chain is Ornithine decarboxylase antizyme 2 (OAZ2), found in Homo sapiens (Human).